A 135-amino-acid chain; its full sequence is Large ribosomal subunit protein uL16c (135 aa).

This sequence belongs to the universal ribosomal protein uL16 family. In terms of assembly, part of the 50S ribosomal subunit.

The protein resides in the plastid. Its subcellular location is the chloroplast. In Lepidium virginicum (Virginia pepperweed), this protein is Large ribosomal subunit protein uL16c.